A 175-amino-acid chain; its full sequence is Endoribonuclease YbeY (175 aa).

Zn(2+)-binding residues include histidine 137, histidine 141, and histidine 147.

Belongs to the endoribonuclease YbeY family. The cofactor is Zn(2+).

The protein resides in the cytoplasm. In terms of biological role, single strand-specific metallo-endoribonuclease involved in late-stage 70S ribosome quality control and in maturation of the 3' terminus of the 16S rRNA. The protein is Endoribonuclease YbeY of Burkholderia ambifaria (strain ATCC BAA-244 / DSM 16087 / CCUG 44356 / LMG 19182 / AMMD) (Burkholderia cepacia (strain AMMD)).